A 718-amino-acid polypeptide reads, in one-letter code: Nucleolar protein 11 (718 aa).

At Lys346 the chain carries N6-methyllysine.

Interacts with UTP4. Interacts with FBL/fibrillarin in a transcription-dependent manner. May associate with the proposed t-UTP subcomplex of the SSU processome containing at least UTP4, WDR43, HEATR1, UTP15, WDR75.

It is found in the nucleus. The protein localises to the nucleolus. In terms of biological role, ribosome biogenesis factor. May be required for both optimal rDNA transcription and small subunit (SSU) pre-rRNA processing at sites A', A0, 1 and 2b. The chain is Nucleolar protein 11 (NOL11) from Bos taurus (Bovine).